A 386-amino-acid polypeptide reads, in one-letter code: MKHVFPTYKRFPIDLVNGTGTVVTDKNGKTYLDFTSGIAVCNLGHCPTNVAEAVQQQLGNIWHTSNLYECALQDSVAELIADGKERLVFFCNSGTESNEAALKLARKYTGKEKIITFEKSFHGRTFGSMSATGQAKIHQGFGELVPGFTYVPYNDIEAFRAEIDENTAAVMLEVIQAEGGVIPANAAFLLEVQLLCKKMGALLIIDEVQTGLGRTGTLYGFEQIGLDPDIFTLAKGLGNGLPIGAMVGKSDLISAFGPGSHGSTFGGNKLALAAAKEILLTMKQTGFLEEVNAKADYFRNLLEANLEVLDNVSDIRGGGFLIGIELENAAEPVITELRDKGLLILTAGTNVLRILPPLTVSYAEIDQAIYLLKSVLENQLIGSEEG.

Pyridoxal 5'-phosphate is bound by residues 94-95 (GT) and F121. Residue R124 coordinates N(2)-acetyl-L-ornithine. 206–209 (DEVQ) serves as a coordination point for pyridoxal 5'-phosphate. K235 is modified (N6-(pyridoxal phosphate)lysine). N(2)-acetyl-L-ornithine is bound at residue S263. T264 provides a ligand contact to pyridoxal 5'-phosphate.

It belongs to the class-III pyridoxal-phosphate-dependent aminotransferase family. ArgD subfamily. As to quaternary structure, homodimer. Requires pyridoxal 5'-phosphate as cofactor.

The protein localises to the cytoplasm. The enzyme catalyses N(2)-acetyl-L-ornithine + 2-oxoglutarate = N-acetyl-L-glutamate 5-semialdehyde + L-glutamate. Its pathway is amino-acid biosynthesis; L-arginine biosynthesis; N(2)-acetyl-L-ornithine from L-glutamate: step 4/4. The polypeptide is Acetylornithine aminotransferase (Listeria monocytogenes serovar 1/2a (strain ATCC BAA-679 / EGD-e)).